We begin with the raw amino-acid sequence, 157 residues long: Glutaredoxin-2, mitochondrial (157 aa).

The transit peptide at methionine 1 to serine 18 directs the protein to the mitochondrion. Residue serine 20 is modified to Phosphoserine. Positions valine 51–asparagine 151 constitute a Glutaredoxin domain. Cysteine 62 is a [2Fe-2S] cluster binding site. Residue lysine 68 coordinates glutathione. Cysteine 71 carries the post-translational modification S-glutathionyl cysteine; alternate. A disulfide bridge links cysteine 71 with cysteine 74. Glutathione is bound by residues glutamine 103 and valine 115. [2Fe-2S] cluster is bound at residue cysteine 147.

This sequence belongs to the glutaredoxin family. As to quaternary structure, monomer; active form. Homodimer; inactive form. The homodimer is probably linked by 1 2Fe-2S cluster.

The protein localises to the mitochondrion. With respect to regulation, the 2Fe-2S present in the homodimer leads to inactivation of the enzyme. The 2Fe-2S may serve as a redox sensor: the presence of one-electron oxidants or reductants leading to the loss of the 2Fe-2S cluster, subsequent monomerization and activation of the enzyme. Its function is as follows. Glutathione-dependent oxidoreductase that facilitates the maintenance of mitochondrial redox homeostasis upon induction of apoptosis by oxidative stress. Involved in response to hydrogen peroxide and regulation of apoptosis caused by oxidative stress. Acts as a very efficient catalyst of monothiol reactions because of its high affinity for protein glutathione-mixed disulfides. Can receive electrons not only from glutathione (GSH), but also from thioredoxin reductase supporting both monothiol and dithiol reactions. Efficiently catalyzes both glutathionylation and deglutathionylation of mitochondrial complex I, which in turn regulates the superoxide production by the complex. Overexpression decreases the susceptibility to apoptosis and prevents loss of cardiolipin and cytochrome c release. The chain is Glutaredoxin-2, mitochondrial (GLRX2) from Bos taurus (Bovine).